The following is a 261-amino-acid chain: Phosphoinositide-3-kinase-interacting protein 1 (261 aa).

Positions 1–21 are cleaved as a signal peptide; sequence MLLAWVRTILVSNMLLAEAYG. The Extracellular portion of the chain corresponds to 22-166; that stretch reads SGGCFWDNGH…NSKEKKDLGT (145 aa). The Kringle domain occupies 24 to 101; sequence GCFWDNGHLY…EKRPCQDLRC (78 aa). 3 disulfides stabilise this stretch: C25-C101, C46-C82, and C70-C96. Residues 90–101 show a composition bias toward basic and acidic residues; sequence APEKRPCQDLRC. The segment at 90-122 is disordered; that stretch reads APEKRPCQDLRCPDTTSQGLPTSATETEEAAEV. Residues 167–187 traverse the membrane as a helical segment; that stretch reads LGYVLGITMMVIIVVIGAGIV. Over 188-261 the chain is Cytoplasmic; that stretch reads LGYTYKRGKD…LMGQAGTPGA (74 aa).

It localises to the cell membrane. Functionally, negative regulator of hepatic phosphatidylinositol 3-kinase (PI3K) activity. This chain is Phosphoinositide-3-kinase-interacting protein 1 (PIK3IP1), found in Bos taurus (Bovine).